The chain runs to 1407 residues: Adenylate cyclase, aggregation specific (1407 aa).

Residues 1–219 lie on the Cytoplasmic side of the membrane; the sequence is MASSSPMFND…KGYLHQHYNS (219 aa). Positions 28 to 131 are disordered; it reads NELHDGNGGG…SNSVANGGHL (104 aa). Over residues 51-63 the composition is skewed to polar residues; it reads LNKSQNQPYTQYN. Residues 64 to 75 show a composition bias toward gly residues; the sequence is NGGGGGGGGGGH. Composition is skewed to low complexity over residues 80–90 and 98–115; these read HLNLNSITNNH and PNTL…NNHS. 6 helical membrane passes run 220 to 240, 244 to 264, 276 to 296, 304 to 324, 325 to 345, and 353 to 373; these read QIML…YGFT, IFML…SIFL, LFHP…LLEY, ILFL…LLFI, WMVM…FLES, and ISFV…LYVL. Topologically, residues 374-962 are cytoplasmic; the sequence is EKFRKESFIA…KYVIINNVVE (589 aa). The Guanylate cyclase 1 domain occupies 438 to 661; sequence SILCFDIVQF…DTIARSHTLE (224 aa). Mg(2+) contacts are provided by Asp443, Ile444, and Asp488. Disordered regions lie at residues 502-590, 751-799, and 828-876; these read AKKQ…EEIE, KSNN…VLGE, and NDIV…EEDF. Low complexity-rich tracts occupy residues 505–526, 535–581, and 752–795; these read QMPN…VNNI, NNNN…NNSG, and SNNN…SSSS. The segment covering 828–846 has biased composition (polar residues); that stretch reads NDIVSPSLTSNSPILDTTV. Residues 847–871 are compositionally biased toward low complexity; the sequence is NNNNNNNNTNNNNKNQNNIYGNNNN. 5 helical membrane-spanning segments follow: residues 963-979, 992-1012, 1018-1038, 1071-1091, and 1105-1125; these read TKFF…MFYL, SNVI…LSFT, PLVY…CTVL, LSVL…SILI, and IGFV…KLAM. The Guanylate cyclase 2 domain maps to 1189-1311; the sequence is SIMFIQIAGF…DTANTASRMQ (123 aa). Residues 1378-1398 traverse the membrane as a helical segment; it reads ATPAGIASPLSGTLLGEIGSF. Topologically, residues 1399 to 1407 are cytoplasmic; the sequence is TTPRFHLSS.

Belongs to the adenylyl cyclase class-4/guanylyl cyclase family. Requires Mg(2+) as cofactor. Expressed throughout the structure in the tipped mound and finger. Expressed primarily in the prestalk region of the slug. In the early culminant expression is increased in the posterior prespore and anterior-most regions and expands into the developing stalk. In the mid and late culminant it is expressed throughout the stalk.

It localises to the membrane. The protein resides in the cell projection. It is found in the uropodium. It carries out the reaction ATP = 3',5'-cyclic AMP + diphosphate. Regulated by cyclic AMP receptor 1 through a guanine nucleotide binding protein and protein CRAC. Both positively and negatively regulated by extracellular cAMP; this regulation is part of the mechanism that establishes the oscillatory cAMP waves during aggregation. In terms of biological role, coordinates cell aggregation by synthesizing the cAMP that influences differentiation and morphogenesis of cells within a developing multicellular structure. The polypeptide is Adenylate cyclase, aggregation specific (acaA) (Dictyostelium discoideum (Social amoeba)).